Consider the following 95-residue polypeptide: Integration host factor subunit beta (95 aa).

Belongs to the bacterial histone-like protein family. Heterodimer of an alpha and a beta chain.

In terms of biological role, this protein is one of the two subunits of integration host factor, a specific DNA-binding protein that functions in genetic recombination as well as in transcriptional and translational control. This chain is Integration host factor subunit beta, found in Klebsiella pneumoniae (strain 342).